The chain runs to 471 residues: Putative multidrug resistance protein MdtD (471 aa).

The Periplasmic portion of the chain corresponds to 1–11; that stretch reads MTDLPDNTRWQ. The chain crosses the membrane as a helical span at residues 12-32; sequence LWIVAFGFFMQSLDTTIVNTA. The Cytoplasmic segment spans residues 33-48; that stretch reads LPSMAQSLGESPLHMH. Residues 49 to 69 traverse the membrane as a helical segment; that stretch reads MVIVSYVLTVAVMLPASGWLA. Residues 70–76 are Periplasmic-facing; the sequence is DKVGVRN. The chain crosses the membrane as a helical span at residues 77–97; sequence IFFTAIVLFTLGSLFCALSGT. Residues 98-101 lie on the Cytoplasmic side of the membrane; that stretch reads LNEL. Residues 102-124 form a helical membrane-spanning segment; that stretch reads LLARALQGVGGAMMVPVGRLTVM. Residues 125–137 are Periplasmic-facing; it reads KIVPREQYMAAMT. The chain crosses the membrane as a helical span at residues 138–158; that stretch reads FVTLPGQVGPLLGPALGGLLV. The Cytoplasmic segment spans residues 159-164; it reads EYASWH. Residues 165-185 form a helical membrane-spanning segment; that stretch reads WIFLINIPVGIIGAIATLMLM. The Periplasmic segment spans residues 186-196; it reads PNYTMQTRRFD. A helical transmembrane segment spans residues 197–217; that stretch reads LSGFLLLAIGMAVLTLALDGS. Residues 218–224 lie on the Cytoplasmic side of the membrane; the sequence is KGTGLSP. Residues 225–245 traverse the membrane as a helical segment; sequence LAITGLVAVGVVALVLYLLHA. Residues 246–262 are Periplasmic-facing; that stretch reads RNNNRALFSLKLFRTRT. Residues 263–283 traverse the membrane as a helical segment; it reads FSLGLAGSFAGRIGSGMLPFM. Over 284–285 the chain is Cytoplasmic; it reads TP. A helical transmembrane segment spans residues 286-306; it reads VFLQIGLGFSPFHAGLMMIPM. Topologically, residues 307-341 are periplasmic; the sequence is VLGSMGMKRIVVQVVNRFGYRRVLVATTLGLSLVT. A helical transmembrane segment spans residues 342 to 362; the sequence is LLFMTTALLGWYYVLPFVLFL. Topologically, residues 363–395 are cytoplasmic; the sequence is QGMVNSTRFSSMNTLTLKDLPDNLASSGNSLLS. The chain crosses the membrane as a helical span at residues 396-416; sequence MIMQLSMSIGVTIAGLLLGLF. Over 417 to 430 the chain is Periplasmic; it reads GSQHVSVDSGTTQT. Residues 431–451 form a helical membrane-spanning segment; it reads VFMYTWLSMAFIIALPAFIFA. Over 452–471 the chain is Cytoplasmic; sequence RVPNDTHQNVAISRRKRSAQ.

It belongs to the major facilitator superfamily. TCR/Tet family.

It localises to the cell inner membrane. The polypeptide is Putative multidrug resistance protein MdtD (Escherichia coli O17:K52:H18 (strain UMN026 / ExPEC)).